The primary structure comprises 100 residues: Large ribosomal subunit protein uL23 (100 aa).

The protein belongs to the universal ribosomal protein uL23 family. In terms of assembly, part of the 50S ribosomal subunit. Contacts protein L29, and trigger factor when it is bound to the ribosome.

In terms of biological role, one of the early assembly proteins it binds 23S rRNA. One of the proteins that surrounds the polypeptide exit tunnel on the outside of the ribosome. Forms the main docking site for trigger factor binding to the ribosome. This chain is Large ribosomal subunit protein uL23, found in Buchnera aphidicola subsp. Schizaphis graminum (strain Sg).